The following is a 134-amino-acid chain: Small ribosomal subunit protein uS11 (134 aa).

The interval 114 to 134 (SISDVTPQPHNGCRPPKRRRV) is disordered.

The protein belongs to the universal ribosomal protein uS11 family. In terms of assembly, part of the 30S ribosomal subunit. Interacts with proteins S7 and S18. Binds to IF-3.

Located on the platform of the 30S subunit, it bridges several disparate RNA helices of the 16S rRNA. Forms part of the Shine-Dalgarno cleft in the 70S ribosome. The chain is Small ribosomal subunit protein uS11 from Corynebacterium efficiens (strain DSM 44549 / YS-314 / AJ 12310 / JCM 11189 / NBRC 100395).